The chain runs to 1067 residues: Isoleucine--tRNA ligase (1067 aa).

Positions 49 to 59 match the 'HIGH' region motif; sequence PYVSGAIHLGT. The short motif at 625–629 is the 'KMSKS' region element; it reads KMSKS. Lys-628 lines the ATP pocket.

The protein belongs to the class-I aminoacyl-tRNA synthetase family. IleS type 2 subfamily. Monomer. Zn(2+) is required as a cofactor.

Its subcellular location is the cytoplasm. It carries out the reaction tRNA(Ile) + L-isoleucine + ATP = L-isoleucyl-tRNA(Ile) + AMP + diphosphate. Functionally, catalyzes the attachment of isoleucine to tRNA(Ile). As IleRS can inadvertently accommodate and process structurally similar amino acids such as valine, to avoid such errors it has two additional distinct tRNA(Ile)-dependent editing activities. One activity is designated as 'pretransfer' editing and involves the hydrolysis of activated Val-AMP. The other activity is designated 'posttransfer' editing and involves deacylation of mischarged Val-tRNA(Ile). The chain is Isoleucine--tRNA ligase from Pyrococcus abyssi (strain GE5 / Orsay).